Consider the following 617-residue polypeptide: Dihydroxy-acid dehydratase (617 aa).

Residue Asp81 coordinates Mg(2+). [2Fe-2S] cluster is bound at residue Cys122. Residues Asp123 and Lys124 each contribute to the Mg(2+) site. Lys124 bears the N6-carboxylysine mark. Cys195 is a binding site for [2Fe-2S] cluster. Glu491 lines the Mg(2+) pocket. Residue Ser517 is the Proton acceptor of the active site.

Belongs to the IlvD/Edd family. Homodimer. It depends on [2Fe-2S] cluster as a cofactor. Requires Mg(2+) as cofactor.

The catalysed reaction is (2R)-2,3-dihydroxy-3-methylbutanoate = 3-methyl-2-oxobutanoate + H2O. It carries out the reaction (2R,3R)-2,3-dihydroxy-3-methylpentanoate = (S)-3-methyl-2-oxopentanoate + H2O. It functions in the pathway amino-acid biosynthesis; L-isoleucine biosynthesis; L-isoleucine from 2-oxobutanoate: step 3/4. The protein operates within amino-acid biosynthesis; L-valine biosynthesis; L-valine from pyruvate: step 3/4. In terms of biological role, functions in the biosynthesis of branched-chain amino acids. Catalyzes the dehydration of (2R,3R)-2,3-dihydroxy-3-methylpentanoate (2,3-dihydroxy-3-methylvalerate) into 2-oxo-3-methylpentanoate (2-oxo-3-methylvalerate) and of (2R)-2,3-dihydroxy-3-methylbutanoate (2,3-dihydroxyisovalerate) into 2-oxo-3-methylbutanoate (2-oxoisovalerate), the penultimate precursor to L-isoleucine and L-valine, respectively. This chain is Dihydroxy-acid dehydratase, found in Buchnera aphidicola subsp. Schizaphis graminum (strain Sg).